The following is a 1830-amino-acid chain: Dedicator of cytokinesis protein 2 (1830 aa).

In terms of domain architecture, SH3 spans D8–V69. K304 bears the N6-acetyllysine mark. The C2 DOCK-type domain occupies R423 to C607. Residues S588 and S593 each carry the phosphoserine modification. K738 bears the N6-acetyllysine mark. The segment at C939 to P1476 is interaction with CRKL. The region spanning Y1211–M1622 is the DOCKER domain. Residues M1651 to S1665 show a composition bias toward polar residues. Residues M1651–R1704 form a disordered region. 4 positions are modified to phosphoserine: S1685, S1706, S1731, and S1784.

It belongs to the DOCK family. As to quaternary structure, homodimer. Interacts with RAC1 and RAC2. Interacts with CRKL and VAV. Interacts with CD3Z. As to expression, specifically expressed in hematopoietic cells. Highly expressed in peripheral blood leukocytes, and expressed at intermediate level in thymus and spleen. Expressed at very low level in the small intestine and colon.

The protein resides in the endomembrane system. It is found in the cytoplasm. It localises to the cytoskeleton. Involved in cytoskeletal rearrangements required for lymphocyte migration in response of chemokines. Activates RAC1 and RAC2, but not CDC42, by functioning as a guanine nucleotide exchange factor (GEF), which exchanges bound GDP for free GTP. May also participate in IL2 transcriptional activation via the activation of RAC2. In Homo sapiens (Human), this protein is Dedicator of cytokinesis protein 2 (DOCK2).